Consider the following 116-residue polypeptide: Immunoglobulin heavy variable 3-66 (116 aa).

The first 19 residues, 1–19 (MEFGLSWVFLVAILKGVQC), serve as a signal peptide directing secretion. The framework-1 stretch occupies residues 20 to 44 (EVQLVESGGGLIQPGGSLRLSCAAS). The region spanning 20–116 (EVQLVESGGG…EDTAVYYCAR (97 aa)) is the Ig-like domain. The cysteines at positions 41 and 114 are disulfide-linked. The interval 45-52 (GFTVSSNY) is complementarity-determining-1. The interval 53–69 (MSWVRQAPGKGLEWVSV) is framework-2. Residues 70-76 (IYSCGST) are complementarity-determining-2. Residues 77–114 (YYADSVKGRFTISRDNSKNTLYLQMNSLRAEDTAVYYC) form a framework-3 region. Residues 115–116 (AR) are complementarity-determining-3.

As to quaternary structure, immunoglobulins are composed of two identical heavy chains and two identical light chains; disulfide-linked.

The protein resides in the secreted. It localises to the cell membrane. Its function is as follows. V region of the variable domain of immunoglobulin heavy chains that participates in the antigen recognition. Immunoglobulins, also known as antibodies, are membrane-bound or secreted glycoproteins produced by B lymphocytes. In the recognition phase of humoral immunity, the membrane-bound immunoglobulins serve as receptors which, upon binding of a specific antigen, trigger the clonal expansion and differentiation of B lymphocytes into immunoglobulins-secreting plasma cells. Secreted immunoglobulins mediate the effector phase of humoral immunity, which results in the elimination of bound antigens. The antigen binding site is formed by the variable domain of one heavy chain, together with that of its associated light chain. Thus, each immunoglobulin has two antigen binding sites with remarkable affinity for a particular antigen. The variable domains are assembled by a process called V-(D)-J rearrangement and can then be subjected to somatic hypermutations which, after exposure to antigen and selection, allow affinity maturation for a particular antigen. The chain is Immunoglobulin heavy variable 3-66 from Homo sapiens (Human).